We begin with the raw amino-acid sequence, 47 residues long: Laccase-2d (47 aa).

The Plastocyanin-like domain maps to 2 to 47 (TGPVADLHIINKDLSPDGFQRPTVVAGGGRDVVSIGRAGDNVTIRF).

Belongs to the multicopper oxidase family. As to quaternary structure, homodimer. The cofactor is Cu cation. N-glycosylated; contains 17% carbohydrates.

The protein resides in the secreted. The catalysed reaction is 4 hydroquinone + O2 = 4 benzosemiquinone + 2 H2O. With respect to regulation, inhibited by sodium azide, SDS and mercaptoethanol, but not by 4-hexyl resocinol, L-cysteine and dithiothreitol. Activity is inhibited by the heavy metal ions Cr, W, Sn, Ag(+) and Hg(2+), but not by Pb(2+), Fe(3+), Ni(2+), Li(2+), Co(2+) or Cd(2+). Functionally, lignin degradation and detoxification of lignin-derived products. Has highest activity towards ABTS, also active towards ferulic acid and guaiacol, but is not active towards tyrosine, vanillic acid, 2,5-dimethyl aniline, p-anisidine or violuric acid. In Cerrena unicolor (Canker rot fungus), this protein is Laccase-2d.